The primary structure comprises 149 residues: Arginine repressor (149 aa).

This sequence belongs to the ArgR family.

The protein resides in the cytoplasm. It functions in the pathway amino-acid biosynthesis; L-arginine biosynthesis [regulation]. Its function is as follows. Regulates arginine biosynthesis genes. This chain is Arginine repressor, found in Geobacillus thermodenitrificans (strain NG80-2).